Here is a 2974-residue protein sequence, read N- to C-terminus: Mediator of RNA polymerase II transcription subunit 13 (2974 aa).

Basic and acidic residues-rich tracts occupy residues 284–299 (EKEPENVTEERQKTPE), 340–367 (MFEPDLRQDKPKEETAAEKEKRMAAREV), 374–390 (RREERRREMEKQRRADD), and 624–633 (SREKRKEYQP). Disordered stretches follow at residues 284–309 (EKEPENVTEERQKTPEAEPPAPPQTT), 340–394 (MFEP…NLED), 624–654 (SREKRKEYQPYHRKRPAKSVKEKKKKAKRKV), 677–749 (FNAW…FADI), 764–801 (LYNPAGGDIEEGDETSNESPDEKTPEGSPNGSPRPKEE), 1032–1063 (PHGSFDHDSEPEFDEQRTGLGEGTSDQYQDGE), 1099–1134 (GMLSPPASNEMPKGGPLSVGPASIESQGLNQIYPTP), 1140–1159 (LQADASQAHSPSIGGKFRST), 1281–1342 (TLAR…TPTY), 1416–1486 (QGGL…DATA), 2052–2078 (ELKKADEHPAPPSTQSENSEGNAATPA), and 2247–2309 (QDEA…PAGM). Positions 351 to 396 (KEETAAEKEKRMAAREVRRLRRQRREERRREMEKQRRADDNLEDYD) form a coiled coil. Composition is skewed to basic residues over residues 634 to 654 (YHRKRPAKSVKEKKKKAKRKV) and 677 to 688 (FNAWKQKKKGPP). Residues 689–717 (PKKDLAKKEAAADKDKDKDKEKDKEKDKD) show a composition bias toward basic and acidic residues. Residues 1035–1048 (SFDHDSEPEFDEQR) are compositionally biased toward basic and acidic residues. Composition is skewed to polar residues over residues 1122–1134 (IESQGLNQIYPTP) and 1140–1149 (LQADASQAHS). 2 stretches are compositionally biased toward pro residues: residues 1284-1299 (RPPPGATSPLPPPTPM) and 1326-1340 (PAYPPTPGPYPPTTP). The span at 1443-1464 (IRNTDAPNDPTVSKLQSAVSRN) shows a compositional bias: polar residues. Residues 1473-1486 (AATSIPTATDDATA) show a composition bias toward low complexity. A compositionally biased stretch (polar residues) spans 2064 to 2073 (STQSENSEGN). Positions 2220 to 2301 (AVEGRLKRQK…EQYPAEESQA (82 aa)) form a coiled coil. Composition is skewed to basic and acidic residues over residues 2247 to 2258 (QDEADKREKMDE) and 2281 to 2292 (EEKKRNKQKENE). The interval 2347-2974 (WKQRDTRVQN…LYHSVARLLV (628 aa)) is mediates transcriptional repression.

This sequence belongs to the Mediator complex subunit 13 family. Component of the Mediator complex.

The protein resides in the nucleus. In terms of biological role, component of the Mediator complex, a coactivator involved in regulated gene transcription of nearly all RNA polymerase II-dependent genes. Mediator functions as a bridge to convey information from gene-specific regulatory proteins to the basal RNA polymerase II transcription machinery. Mediator is recruited to promoters by direct interactions with regulatory proteins and serves as a scaffold for the assembly of a functional preinitiation complex with RNA polymerase II and the general transcription factors. In Caenorhabditis briggsae, this protein is Mediator of RNA polymerase II transcription subunit 13 (let-19).